Consider the following 79-residue polypeptide: Dicentracin (79 aa).

The signal sequence occupies residues 1-22 (MKCATLFLVLSMVVLMAEPGDA). G44 carries the post-translational modification Glycine amide. Positions 47 to 79 (AQQDQQDQQYQQDQQDQQAEQYQRFNRERAAFD) are excised as a propeptide. The tract at residues 48–67 (QQDQQDQQYQQDQQDQQAEQ) is disordered.

Belongs to the pleurocidin family.

The protein localises to the secreted. The protein is Dicentracin of Dicentrarchus labrax (European seabass).